We begin with the raw amino-acid sequence, 59 residues long: Ribosome modulation factor (59 aa).

It belongs to the ribosome modulation factor family.

It localises to the cytoplasm. During stationary phase, converts 70S ribosomes to an inactive dimeric form (100S ribosomes). In Aeromonas veronii (strain B565), this protein is Ribosome modulation factor.